Consider the following 153-residue polypeptide: Interleukin-4 (153 aa).

The first 24 residues, 1 to 24 (MGLTSQLLPPLFFLLACAGNFVHG), serve as a signal peptide directing secretion. 3 disulfide bridges follow: Cys27–Cys151, Cys48–Cys89, and Cys70–Cys123. A glycan (N-linked (GlcNAc...) asparagine) is linked at Asn62.

This sequence belongs to the IL-4/IL-13 family.

The protein localises to the secreted. Participates in at least several B-cell activation processes as well as of other cell types. It is a costimulator of DNA-synthesis. It induces the expression of class II MHC molecules on resting B-cells. It enhances both secretion and cell surface expression of IgE and IgG1. It also regulates the expression of the low affinity Fc receptor for IgE (CD23) on both lymphocytes and monocytes. Positively regulates IL31RA expression in macrophages. Stimulates autophagy in dendritic cells by interfering with mTORC1 signaling and through the induction of RUFY4. The sequence is that of Interleukin-4 (IL4) from Macaca fascicularis (Crab-eating macaque).